Reading from the N-terminus, the 474-residue chain is Aspartyl/glutamyl-tRNA(Asn/Gln) amidotransferase subunit B (474 aa).

Belongs to the GatB/GatE family. GatB subfamily. In terms of assembly, heterotrimer of A, B and C subunits.

The enzyme catalyses L-glutamyl-tRNA(Gln) + L-glutamine + ATP + H2O = L-glutaminyl-tRNA(Gln) + L-glutamate + ADP + phosphate + H(+). It carries out the reaction L-aspartyl-tRNA(Asn) + L-glutamine + ATP + H2O = L-asparaginyl-tRNA(Asn) + L-glutamate + ADP + phosphate + 2 H(+). Its function is as follows. Allows the formation of correctly charged Asn-tRNA(Asn) or Gln-tRNA(Gln) through the transamidation of misacylated Asp-tRNA(Asn) or Glu-tRNA(Gln) in organisms which lack either or both of asparaginyl-tRNA or glutaminyl-tRNA synthetases. The reaction takes place in the presence of glutamine and ATP through an activated phospho-Asp-tRNA(Asn) or phospho-Glu-tRNA(Gln). This is Aspartyl/glutamyl-tRNA(Asn/Gln) amidotransferase subunit B from Limosilactobacillus fermentum (strain NBRC 3956 / LMG 18251) (Lactobacillus fermentum).